The following is a 527-amino-acid chain: Rhamnogalacturonate lyase A (527 aa).

The first 20 residues, 1-20 (MLSKTFLLSSAVLWARVANA), serve as a signal peptide directing secretion. N-linked (GlcNAc...) asparagine glycosylation is found at Asn27 and Asn46. 2 disulfides stabilise this stretch: Cys50–Cys93 and Cys184–Cys193. A glycan (N-linked (GlcNAc...) asparagine) is linked at Asn351.

This sequence belongs to the polysaccharide lyase 4 family.

It localises to the secreted. The catalysed reaction is Endotype eliminative cleavage of L-alpha-rhamnopyranosyl-(1-&gt;4)-alpha-D-galactopyranosyluronic acid bonds of rhamnogalacturonan I domains in ramified hairy regions of pectin leaving L-rhamnopyranose at the reducing end and 4-deoxy-4,5-unsaturated D-galactopyranosyluronic acid at the non-reducing end.. Its function is as follows. Pectinolytic enzymes consist of four classes of enzymes: pectin lyase, polygalacturonase, pectin methylesterase and rhamnogalacturonase. Degrades the rhamnogalacturonan I (RG-I) backbone of pectin. Active against linseed rhamnogalacturonan. The protein is Rhamnogalacturonate lyase A (rglA) of Emericella nidulans (strain FGSC A4 / ATCC 38163 / CBS 112.46 / NRRL 194 / M139) (Aspergillus nidulans).